Consider the following 126-residue polypeptide: Holo-[acyl-carrier-protein] synthase (126 aa).

Mg(2+) is bound by residues aspartate 8 and glutamate 59.

Belongs to the P-Pant transferase superfamily. AcpS family. The cofactor is Mg(2+).

It localises to the cytoplasm. It carries out the reaction apo-[ACP] + CoA = holo-[ACP] + adenosine 3',5'-bisphosphate + H(+). Transfers the 4'-phosphopantetheine moiety from coenzyme A to a Ser of acyl-carrier-protein. The polypeptide is Holo-[acyl-carrier-protein] synthase (Rickettsia prowazekii (strain Madrid E)).